Consider the following 492-residue polypeptide: Target of Myb1 membrane trafficking protein (492 aa).

M1 is subject to N-acetylmethionine. S11 carries the post-translational modification Phosphoserine. The region spanning A20–P152 is the VHS domain. The KRKK signature appears at K48–K56. S160 is modified (phosphoserine). T164 is subject to Phosphothreonine. Polar residues predominate over residues R167–A195. Residues R167–E215 are disordered. A phosphoserine mark is found at S176, S180, and S208. One can recognise a GAT domain in the interval E215–R303. Positions D321–G326 are clathrin box. A phosphoserine mark is found at S355 and S376. K385 is covalently cross-linked (Glycyl lysine isopeptide (Lys-Gly) (interchain with G-Cter in SUMO2)). Residues T392 to P463 form an interaction with MYO6 region. The segment at R450–L492 is disordered. The residue at position 462 (S462) is a Phosphoserine.

This sequence belongs to the TOM1 family. In terms of assembly, found in a complex with TOLLIP; interacts (via GAT domain) with TOLLIP (via N-terminus); the interactions leads to TOM1-recruitment to endosomes and inhibition of TOLLIP binding to PtdIns(3)P. Interacts (via GAT domain and the C-terminal part of the VHS domain) with UBC/ubiquitin. Interacts (via clathrin box and C-terminus) with clathrin heavy chain. Interacts with MYO6. Interacts with TAX1BP1; CALCOCO2/NDP52 and OPTN; the interaction is indirect and is mediated by MYO6, which acts as a bridge between TOM1 and the three autophagy receptors. Interacts (via C-terminus) with ZFYVE16 (via C-terminus); interaction is required to target TOM1 and clathrin to endosomes. Interacts with LRBA. Monoubiquitinated. In terms of tissue distribution, ubiquitous. In adult brain, it is highly expressed at the mesencephalic level, in the hippocampal formation and medial lemniscus. In cerebellum, it is highly expressed in Purkinje cells and granular layers.

It is found in the cytoplasm. It localises to the endosome membrane. Its subcellular location is the early endosome membrane. Functionally, adapter protein that plays a role in the intracellular membrane trafficking of ubiquitinated proteins, thereby participating in autophagy, ubiquitination-dependent signaling and receptor recycling pathways. Acts as a MYO6/Myosin VI adapter protein that targets MYO6 to endocytic structures. Together with MYO6, required for autophagosomal delivery of endocytic cargo, the maturation of autophagosomes and their fusion with lysosomes. MYO6 links TOM1 with autophagy receptors, such as TAX1BP1; CALCOCO2/NDP52 and OPTN. Binds to polyubiquitinated proteins via its GAT domain. In a complex with TOLLIP, recruits ubiquitin-conjugated proteins onto early endosomes. The Tom1-Tollip complex may regulate endosomal trafficking by linking polyubiquitinated proteins to clathrin. Mediates clathrin recruitment to early endosomes by ZFYVE16. Modulates binding of TOLLIP to phosphatidylinositol 3-phosphate (PtdIns(3)P) via binding competition; the association with TOLLIP may favor the release of TOLLIP from endosomal membranes, allowing TOLLIP to commit to cargo trafficking. Acts as a phosphatidylinositol 5-phosphate (PtdIns(5)P) effector by binding to PtdIns(5)P, thereby regulating endosomal maturation. PtdIns(5)P-dependent recruitment to signaling endosomes may block endosomal maturation. Also inhibits Toll-like receptor (TLR) signaling and participates in immune receptor recycling. In Mus musculus (Mouse), this protein is Target of Myb1 membrane trafficking protein.